We begin with the raw amino-acid sequence, 154 residues long: Ribosome maturation factor RimP (154 aa).

This sequence belongs to the RimP family.

It localises to the cytoplasm. Its function is as follows. Required for maturation of 30S ribosomal subunits. In Finegoldia magna (strain ATCC 29328 / DSM 20472 / WAL 2508) (Peptostreptococcus magnus), this protein is Ribosome maturation factor RimP.